A 1036-amino-acid chain; its full sequence is Vacuolar basic amino acid transporter VSB1 (1036 aa).

Residues 1 to 213 (MGRTIRRRRS…SKFAHYLPAA (213 aa)) lie on the Vacuolar side of the membrane. Phosphoserine occurs at positions 42 and 127. T130 is modified (phosphothreonine). A phosphoserine mark is found at S140, S144, S149, S152, and S153. The chain crosses the membrane as a helical span at residues 214-234 (VLGLLLNILDALSYGMIIFPI). Residues 235-236 (TE) are Cytoplasmic-facing. A helical transmembrane segment spans residues 237–257 (PVFSHLGPTGISMFYISTIIS). Residues 258–269 (QAVYSGGWSSFP) are Vacuolar-facing. The helical transmembrane segment at 270-290 (SGIGSEMIEITPFYHTMALAI) threads the bilayer. Residues 291–300 (KEALAGNDDE) are Cytoplasmic-facing. A helical transmembrane segment spans residues 301–321 (IITTTIFCYVISSMLTGVVFY). Residues 322-338 (ALGKLRLGKIVGFFPRH) are Vacuolar-facing. A helical transmembrane segment spans residues 339–359 (ILIGCIGGVGYFLIITGIEVT). The Cytoplasmic portion of the chain corresponds to 360–375 (TRVAKFEYSWPFFSGL). A helical transmembrane segment spans residues 376-396 (FTDYDTLAKWLLPVLLTVVLI). The Vacuolar portion of the chain corresponds to 397–405 (GTQRYFKNS). A helical transmembrane segment spans residues 406–426 (LVLPSFYILTLVLFHFIVAII). The Cytoplasmic portion of the chain corresponds to 427 to 473 (PTLSLDALRQAGWIFPIANSDSKWYDHYRLFNVHKVHWSLVLQQIPT). The helical transmembrane segment at 474–494 (MMALTFFGILHVPINVPALAM) threads the bilayer. At 495–515 (SLQMDKYDVDRELIAHGYSNF) the chain is on the vacuolar side. Residues 516-536 (FSGLLGSVQNYLVYTNSVLFI) traverse the membrane as a helical segment. The Cytoplasmic portion of the chain corresponds to 537–546 (RAGADSPFAG). A helical membrane pass occupies residues 547 to 567 (FLLIALTICIMIIGPVIISFI). P568 is a topological domain (vacuolar). The chain crosses the membrane as a helical span at residues 569–589 (ICIVGSLIFLLGYELLVEALV). Topologically, residues 590-604 (DTWNKLNRFEYLTVV) are cytoplasmic. Residues 605 to 625 (IIVFTMGIFDFVLGIIVGILI) traverse the membrane as a helical segment. Residues 626–664 (ACFSFLVDSTKLQTINGEYNGNVARSTVYRDYVQTKFLD) lie on the Vacuolar side of the membrane. The STAS domain maps to 660–781 (TKFLDGIGEQ…ADLNSALEWC (122 aa)). The chain crosses the membrane as a helical span at residues 665 to 685 (GIGEQIYVLKLQNLLFFGTII). Residues 686-1036 (SIEEKIERLL…ELLGYTLVSA (351 aa)) are Cytoplasmic-facing. S842 is modified (phosphoserine). T847 bears the Phosphothreonine mark.

The protein resides in the vacuole membrane. Its function is as follows. Amino acid transporter involved in vacuolar uptake of basic amino acids for storage during nitrogen replete condititions. May function as an amino acid/proton antiporter. This Saccharomyces cerevisiae (strain ATCC 204508 / S288c) (Baker's yeast) protein is Vacuolar basic amino acid transporter VSB1.